A 374-amino-acid chain; its full sequence is Anhydro-N-acetylmuramic acid kinase (374 aa).

9 to 16 is an ATP binding site; the sequence is GTSLDGID.

Belongs to the anhydro-N-acetylmuramic acid kinase family.

The catalysed reaction is 1,6-anhydro-N-acetyl-beta-muramate + ATP + H2O = N-acetyl-D-muramate 6-phosphate + ADP + H(+). The protein operates within amino-sugar metabolism; 1,6-anhydro-N-acetylmuramate degradation. Its pathway is cell wall biogenesis; peptidoglycan recycling. Catalyzes the specific phosphorylation of 1,6-anhydro-N-acetylmuramic acid (anhMurNAc) with the simultaneous cleavage of the 1,6-anhydro ring, generating MurNAc-6-P. Is required for the utilization of anhMurNAc either imported from the medium or derived from its own cell wall murein, and thus plays a role in cell wall recycling. The polypeptide is Anhydro-N-acetylmuramic acid kinase (Methylobacterium nodulans (strain LMG 21967 / CNCM I-2342 / ORS 2060)).